Here is a 356-residue protein sequence, read N- to C-terminus: Heat-inducible transcription repressor HrcA (356 aa).

The protein belongs to the HrcA family.

Its function is as follows. Negative regulator of class I heat shock genes (grpE-dnaK-dnaJ and groELS operons). Prevents heat-shock induction of these operons. The sequence is that of Heat-inducible transcription repressor HrcA from Chlorobaculum parvum (strain DSM 263 / NCIMB 8327) (Chlorobium vibrioforme subsp. thiosulfatophilum).